Here is a 385-residue protein sequence, read N- to C-terminus: SH3 domain-binding protein 5-like (385 aa).

The segment at 1-58 (MAELRQIPGGRETPQGELRPEVVEDEVPRSPVAEEPGGGGSNSSEAKLSPREEEELDP) is disordered. Threonine 13 is modified (phosphothreonine). The span at 18-28 (LRPEVVEDEVP) shows a compositional bias: basic and acidic residues. Phosphoserine is present on residues serine 30 and serine 49. Coiled-coil stretches lie at residues 59 to 140 (RIQE…YERA) and 169 to 272 (WQEM…EQIH). Residues 272 to 328 (HARRRGQPAHTPGQRRSSPVGAEAGPDGGEDADSGIIEGAEGGGLEEGVSLGPGAAP) form a disordered region. Residues 318–328 (EGVSLGPGAAP) show a composition bias toward low complexity. Serine 343, serine 350, serine 358, and serine 362 each carry phosphoserine. The segment at 359-385 (DHTSLDGQELGPRSGGRGGRHQRSISL) is disordered. Residues 376 to 385 (GGRHQRSISL) are compositionally biased toward basic residues.

This sequence belongs to the SH3BP5 family.

In terms of biological role, functions as a guanine nucleotide exchange factor (GEF) for RAB11A. The chain is SH3 domain-binding protein 5-like (SH3BP5L) from Bos taurus (Bovine).